A 122-amino-acid chain; its full sequence is Large ribosomal subunit protein uL14 (122 aa).

The protein belongs to the universal ribosomal protein uL14 family. Part of the 50S ribosomal subunit. Forms a cluster with proteins L3 and L19. In the 70S ribosome, L14 and L19 interact and together make contacts with the 16S rRNA in bridges B5 and B8.

In terms of biological role, binds to 23S rRNA. Forms part of two intersubunit bridges in the 70S ribosome. This Buchnera aphidicola subsp. Acyrthosiphon pisum (strain 5A) protein is Large ribosomal subunit protein uL14.